We begin with the raw amino-acid sequence, 367 residues long: Histidinol-phosphate aminotransferase (367 aa).

Position 221 is an N6-(pyridoxal phosphate)lysine (Lys-221).

This sequence belongs to the class-II pyridoxal-phosphate-dependent aminotransferase family. Histidinol-phosphate aminotransferase subfamily. Homodimer. The cofactor is pyridoxal 5'-phosphate.

The catalysed reaction is L-histidinol phosphate + 2-oxoglutarate = 3-(imidazol-4-yl)-2-oxopropyl phosphate + L-glutamate. The protein operates within amino-acid biosynthesis; L-histidine biosynthesis; L-histidine from 5-phospho-alpha-D-ribose 1-diphosphate: step 7/9. In Erythrobacter litoralis (strain HTCC2594), this protein is Histidinol-phosphate aminotransferase.